The chain runs to 119 residues: Large ribosomal subunit protein bL20 (119 aa).

It belongs to the bacterial ribosomal protein bL20 family.

Its function is as follows. Binds directly to 23S ribosomal RNA and is necessary for the in vitro assembly process of the 50S ribosomal subunit. It is not involved in the protein synthesizing functions of that subunit. This chain is Large ribosomal subunit protein bL20, found in Polaromonas sp. (strain JS666 / ATCC BAA-500).